The primary structure comprises 809 residues: MDLFIESKINSLLQFLFGSRQDFLRNFKTWSNNNNNLSIYLLIFGIVVFFYKKPDHLNYIVESVSEMTTNFRNNNSLSRWLPRSKFTHLDEEILKRGGFIAGLVNDGNTCFMNSVLQSLASSRELMEFLDNNVIRTYEEIEQNEHNEEGNGQESAQDEATHKKNTRKGGKVYGKHKKKLNRKSSSKEDEEKSQEPDITFSVALRDLLSALNAKYYRDKPYFKTNSLLKAMSKSPRKNILLGYDQEDAQEFFQNILAELESNVKSLNTEKLDTTPVAKSELPDDALVGQLNLGEVGTVYIPTEQIDPNSILHDKSIQNFTPFKLMTPLDGITAERIGCLQCGENGGIRYSVFSGLSLNLPNENIGSTLKLSQLLSDWSKPEIIEGVECNRCALTAAHSHLFGQLKEFEKKPEGSIPEKLINAVKDRVHQIEEVLAKPVIDDEDYKKLHTANMVRKCSKSKQILISRPPPLLSIHINRSVFDPRTYMIRKNNSKVLFKSRLNLAPWCCDINEINLDARLPMSKKEKAAQQDSSEDENIGGEYYTKLHERFEQEFEDSEEEKEYDDAEGNYASHYNHTKDISNYDPLNGEVDGVTSDDEDEYIEETDALGNTIKKRIIEHSDVENENVKDNEELQEIDNVSLDEPKINVEDQLETSSDEEDVIPAPPINYARSFSTVPATPLTYSLRSVIVHYGTHNYGHYIAFRKYRGCWWRISDETVYVVDEAEVLSTPGVFMLFYEYDFDEETGKMKDDLEAIQSNNEEDDEKEQEQKGVQEPKESQEQGEGEEQEEGQEQMKFERTEDHRDISGKDVN.

The region spanning 101–738 (AGLVNDGNTC…GVFMLFYEYD (638 aa)) is the USP domain. C110 functions as the Nucleophile in the catalytic mechanism. Positions 143–195 (NEHNEEGNGQESAQDEATHKKNTRKGGKVYGKHKKKLNRKSSSKEDEEKSQEP) are disordered. Residues 162 to 183 (KKNTRKGGKVYGKHKKKLNRKS) are compositionally biased toward basic residues. Residues 184–194 (SSKEDEEKSQE) are compositionally biased toward basic and acidic residues. Residues S530, S531, and S555 each carry the phosphoserine modification. A disordered region spans residues 569 to 596 (ASHYNHTKDISNYDPLNGEVDGVTSDDE). Phosphoserine occurs at positions 618 and 638. Residue T652 is modified to Phosphothreonine. Phosphoserine is present on residues S653, S654, and S670. H697 acts as the Proton acceptor in catalysis. The segment at 750-809 (LEAIQSNNEEDDEKEQEQKGVQEPKESQEQGEGEEQEEGQEQMKFERTEDHRDISGKDVN) is disordered. Residue S755 is modified to Phosphoserine. A compositionally biased stretch (basic and acidic residues) spans 765–777 (QEQKGVQEPKESQ). A compositionally biased stretch (acidic residues) spans 778 to 789 (EQGEGEEQEEGQ). Basic and acidic residues predominate over residues 790–809 (EQMKFERTEDHRDISGKDVN).

The protein belongs to the peptidase C19 family.

The catalysed reaction is Thiol-dependent hydrolysis of ester, thioester, amide, peptide and isopeptide bonds formed by the C-terminal Gly of ubiquitin (a 76-residue protein attached to proteins as an intracellular targeting signal).. In terms of biological role, has an ATP-independent isopeptidase activity, cleaving at the C-terminus of the ubiquitin moiety in natural or engineered linear fusion proteins, irrespective of their size or the presence of an N-terminal extension to ubiquitin. The chain is Ubiquitin carboxyl-terminal hydrolase 1 (UBP1) from Saccharomyces cerevisiae (strain ATCC 204508 / S288c) (Baker's yeast).